We begin with the raw amino-acid sequence, 979 residues long: MRLGNRPEDIRTCVHLRWHIHGLLRQENASVVISKCLRHGAWRLLLWLLLLATWDVGSGQLHYSVPEEAKHGTFVGRIAQDLGLELAELVPRLFRVVSKDRGDLLEVNLQNGILFVNSRIDREELCGQNAECSIHLEVIVDRPLQVFHVEVEVRDINDNPPIFSVAEQKILVAESRLLDSRFPLEGASDADVGENSMLTYKLSSNEFFILDIVNKRGKGKFPVLVLRKLIDREENPQLKLLLTATDGGKPEFTGSVSLLIQVLDVNDNAPVFDRSVYEVKMYENQENKTLVIWLNATDSDEGINKEVEYSFSSLASSIIRQKFLINEKTGEIKINGAIDFEESNNYEIHVDATDKGYPPMVAHCTVLVEILDENDNAPEIVLTSLSLPVKEDAPLGSVIALISVSDKDSGVNGQVTCSLTNHVPFKLVSTFKNYYSLVLDSALDRETTADYKVVVTARDGGSPSLWATASVSVEVADVNDNAPAFAHPEYTVFVKENNPPGVHIFTVLAVDADAQENALVSYSLVERRVGERLLSSYVSVHAESGKVFALQPLDHEELELLQFQVSARDAGVPALGSNVTLQVFVQDENDNPPTLLGHQSGGPAGEFSQLVSRSVGAGHVVSKVRAVDADSGYNAWLSYELHPTVGARSPFRVGLYTGEISMTRALDESDLPRQRLLVLVKDHGEPMLIATATVLVSLVENGQVPKASSQGLPNSSRREASLMDVNVYLIIAICAVSSLLVLTLLLYTALRCSAVPMQAGCGLGKPTLVCSSAVGTWSYSQQRQQRVCSGEGPPKTDLMAFSPSLTPCPVAEVGMESHSVGGDVPGKPRQPNPDWRYSASLRAGMHSSVHLEEAGILRAGPGGPDQQWPTVSSATPEPEAGEVSPPVGAGVNSNSWTFKYGPGNPKQSGPGELPDKFIIPGSPAIISIRQEPANNQIDKSDFITFGKKEETKKKKKKKKGNKTQEKKEKGNSTTDNSDQ.

Positions 1 to 59 (MRLGNRPEDIRTCVHLRWHIHGLLRQENASVVISKCLRHGAWRLLLWLLLLATWDVGSG) are cleaved as a signal peptide. The Extracellular portion of the chain corresponds to 60-726 (QLHYSVPEEA…RREASLMDVN (667 aa)). Cadherin domains lie at 64-163 (SVPE…PPIF), 164-272 (SVAE…APVF), 273-380 (DRSV…APEI), 381-485 (VLTS…APAF), 486-595 (AHPE…PPTL), and 611-707 (VSRS…VPKA). Asparagine 287 and asparagine 295 each carry an N-linked (GlcNAc...) asparagine glycan. N-linked (GlcNAc...) asparagine glycosylation occurs at asparagine 578. The chain crosses the membrane as a helical span at residues 727–747 (VYLIIAICAVSSLLVLTLLLY). Topologically, residues 748 to 979 (TALRCSAVPM…GNSTTDNSDQ (232 aa)) are cytoplasmic. PXXP repeat units follow at residues 763-766 (LGKP), 828-831 (PRQP), 861-864 (PGGP), 902-905 (PGNP), and 920-923 (PGSP). A 5 X 4 AA repeats of P-X-X-P region spans residues 763–923 (LGKPTLVCSS…PDKFIIPGSP (161 aa)). The segment at 859–979 (AGPGGPDQQW…GNSTTDNSDQ (121 aa)) is disordered. Residues 938–952 (DKSDFITFGKKEETK) show a composition bias toward basic and acidic residues.

It is found in the cell membrane. Its function is as follows. Potential calcium-dependent cell-adhesion protein. May be involved in the establishment and maintenance of specific neuronal connections in the brain. This chain is Protocadherin alpha-9, found in Mus musculus (Mouse).